The following is a 334-amino-acid chain: Putative violet-sensitive opsin (334 aa).

The Extracellular segment spans residues Met-1–Ala-29. Residue Asn-10 is glycosylated (N-linked (GlcNAc...) asparagine). Residues Phe-30–Ala-54 traverse the membrane as a helical segment. At Thr-55–Asn-66 the chain is on the cytoplasmic side. A helical membrane pass occupies residues Tyr-67–Phe-88. The Extracellular portion of the chain corresponds to Leu-89 to Glu-106. An intrachain disulfide couples Cys-103 to Cys-179. A helical transmembrane segment spans residues Ala-107 to Phe-126. Residues Glu-127–His-145 lie on the Cytoplasmic side of the membrane. The chain crosses the membrane as a helical span at residues Ala-146 to Ser-168. At Arg-169–Ser-194 the chain is on the extracellular side. The helical transmembrane segment at Tyr-195–Leu-222 threads the bilayer. The Cytoplasmic portion of the chain corresponds to Arg-223–Arg-244. Residues Met-245–Asp-272 form a helical membrane-spanning segment. The Extracellular segment spans residues Glu-273–Leu-279. The chain crosses the membrane as a helical span at residues Val-280–Met-301. N6-(retinylidene)lysine is present on Lys-288. Over Asn-302 to Ser-334 the chain is Cytoplasmic.

Belongs to the G-protein coupled receptor 1 family. Opsin subfamily. Post-translationally, phosphorylated on some or all of the serine and threonine residues present in the C-terminal region. As to expression, the three color pigments are found in the cone photoreceptor cells.

The protein localises to the membrane. In terms of biological role, visual pigments are the light-absorbing molecules that mediate vision. They consist of an apoprotein, opsin, covalently linked to cis-retinal. This Oryzias latipes (Japanese rice fish) protein is Putative violet-sensitive opsin.